The following is a 393-amino-acid chain: Probable acetyl-CoA acyltransferase (393 aa).

Residue Cys88 is the Acyl-thioester intermediate of the active site. Residues His349 and Cys378 each act as proton acceptor in the active site.

Belongs to the thiolase-like superfamily. Thiolase family.

The protein resides in the cytoplasm. It carries out the reaction 2 acetyl-CoA = acetoacetyl-CoA + CoA. In Staphylococcus aureus (strain MSSA476), this protein is Probable acetyl-CoA acyltransferase.